The sequence spans 427 residues: Peptidase B (427 aa).

Residues Lys-195 and Asp-200 each contribute to the Mn(2+) site. Lys-207 is a catalytic residue. Mn(2+) is bound by residues Asp-218, Asp-277, and Glu-279. Arg-281 is a catalytic residue.

It belongs to the peptidase M17 family. Homohexamer. The cofactor is Mn(2+).

Its subcellular location is the cytoplasm. It carries out the reaction Release of an N-terminal amino acid, Xaa, from a peptide or arylamide. Xaa is preferably Glu or Asp but may be other amino acids, including Leu, Met, His, Cys and Gln.. Probably plays an important role in intracellular peptide degradation. This chain is Peptidase B, found in Escherichia coli O139:H28 (strain E24377A / ETEC).